The primary structure comprises 201 residues: MATRPSSLVDSLEDEEDPQTLRRERSGSPRPRKIPRNALTQPVDQLLKDLRKNPSMISDPDQRTGREQLSNDELIKKLVTELAENSMIEAEEVRGTLGDISARIEAGFESLSALQVETIQTAQRCDHSDSIRILGENIKILDRSMKTMMETMKLMMEKVDLLYASTAVGTSAPMLPSHPAPPRIYPQLPSAPTADEWDIIP.

Residues 1–70 (MATRPSSLVD…DQRTGREQLS (70 aa)) are disordered. 2 short sequence motifs (nuclear localization signal) span residues 29 to 36 (PRPRKIPR) and 181 to 193 (PPRI…SAPT).

In terms of assembly, homomultimer; only active in its oligomeric state. Interacts with nucleoprotein/N. Interacts with matrix/M protein. Interacts with host TBK1. Interacts with polymerase L. Interacts with host HMGB1; this interaction is required to stabilize RNP on chromosomes. Post-translationally, phosphorylated by host PKC epsilon and casein kinase II.

It is found in the host nucleus. Its subcellular location is the host cytoplasm. Functionally, essential component of the RNA polymerase transcription and replication complex. Acts as a scaffold which brings L in close proximity to the N-RNA complex. Plays a role in the segregation of the viral genome in host daughter cells during mitosis by interacting with host HMGB1, a host chromatin-remodeling DNA architectural protein, thereby stabilizing RNP on chromosomes. Interacts with host TBK1 and thus interferes with activation of cellular antiviral state. Inhibits cellular histone acetyltransferase activities. The sequence is that of Phosphoprotein (P/X) from Bos taurus (Bovine).